Reading from the N-terminus, the 487-residue chain is rRNA N(6)-adenosine-methyltransferase ZCCHC4 (487 aa).

Residues C28, H30, C52, C61, C113, C116, H128, and H131 each contribute to the Zn(2+) site. The GRF-type zinc-finger motif lies at 28 to 70; that stretch reads CPHGPTLLFVKVSQGKEQGRRFYACSACRDRKDCHFFQWEDDK. S-adenosyl-L-methionine-binding positions include 160 to 163, R190, D213, 231 to 232, and D264; these read QYLF and NM. The interval 323–343 is regulatory loop; it reads QVDYDNHALYKHGKTGRKQSP. The Zn(2+) site is built by C366, C369, H379, C380, C383, C386, H396, C397, C400, C403, H410, C411, C414, C417, H422, and C424. A DHHC domain is found at 381 to 431; it reads NICNCCTSKDGRPWKHCTQCNKCVKPSWTHCSACNHCALPDHPCGTAGRGC. Residues 429-446 form a CCHC-type zinc finger; it reads RGCFLCGGKDHKRRGCPH. A disordered region spans residues 445 to 487; the sequence is PHQSVSAHGKRMENLKQKNIKGSMKKQPIAATSKKRKRKRNNP. Residues 477-487 are compositionally biased toward basic residues; the sequence is SKKRKRKRNNP.

Belongs to the ZCCHC4 family.

It is found in the cytoplasm. The protein localises to the nucleus. It localises to the nucleolus. It catalyses the reaction adenosine(4220) in 28S rRNA + S-adenosyl-L-methionine = N(6)-methyladenosine(4220) in 28S rRNA + S-adenosyl-L-homocysteine + H(+). RRNA N6-methyltransferase that specifically methylates the adenine in position 4220 of 28S rRNA. N6-methylation of adenine(4220) in 28S rRNA is required for translation. The chain is rRNA N(6)-adenosine-methyltransferase ZCCHC4 (zcchc4) from Xenopus tropicalis (Western clawed frog).